The primary structure comprises 240 residues: UDP-2,3-diacylglucosamine hydrolase (240 aa).

Mn(2+) is bound by residues Asp8, His10, Asp41, Asn79, and His114. 79–80 (NR) provides a ligand contact to substrate. Substrate is bound by residues Asp122, Ser160, Asn164, Lys167, and His195. His195 and His197 together coordinate Mn(2+).

Belongs to the LpxH family. It depends on Mn(2+) as a cofactor.

Its subcellular location is the cell inner membrane. The catalysed reaction is UDP-2-N,3-O-bis[(3R)-3-hydroxytetradecanoyl]-alpha-D-glucosamine + H2O = 2-N,3-O-bis[(3R)-3-hydroxytetradecanoyl]-alpha-D-glucosaminyl 1-phosphate + UMP + 2 H(+). The protein operates within glycolipid biosynthesis; lipid IV(A) biosynthesis; lipid IV(A) from (3R)-3-hydroxytetradecanoyl-[acyl-carrier-protein] and UDP-N-acetyl-alpha-D-glucosamine: step 4/6. Its function is as follows. Hydrolyzes the pyrophosphate bond of UDP-2,3-diacylglucosamine to yield 2,3-diacylglucosamine 1-phosphate (lipid X) and UMP by catalyzing the attack of water at the alpha-P atom. Involved in the biosynthesis of lipid A, a phosphorylated glycolipid that anchors the lipopolysaccharide to the outer membrane of the cell. This Salmonella agona (strain SL483) protein is UDP-2,3-diacylglucosamine hydrolase.